A 309-amino-acid polypeptide reads, in one-letter code: HTH-type transcriptional activator AaeR (309 aa).

Positions 1-59 (MERLKRMSVFAKVVEFGSFTAAARQLQMSVSSISQTVSKLEDELQVKLLNRSTRSIGLT) constitute an HTH lysR-type domain. The H-T-H motif DNA-binding region spans 19-38 (FTAAARQLQMSVSSISQTVS).

The protein belongs to the LysR transcriptional regulatory family.

Its activity is regulated as follows. Activity is regulated by p-hydroxybenzoic acid. Functionally, transcriptional regulator that activates expression of the aaeXAB operon, which is involved in the efflux of aromatic carboxylic acids such as p-hydroxybenzoic acid (pHBA). In the presence of the effector pHBA, acts by binding to a single target within the aaeXAB-aaeR intergenic region. In the absence of pHBA, binds more than 50 sites along the E.coli K12 genome, including genes related to biofilm formation and several genes involved in stress response, suggesting that it might play a role in quorum sensing in the absence of pHBA. The chain is HTH-type transcriptional activator AaeR from Escherichia coli (strain K12).